The sequence spans 160 residues: SsrA-binding protein (160 aa).

Positions 133–160 are disordered; the sequence is GKKLHDKRDTEKERDWKREQQRLLRDRG. The segment covering 138–160 has biased composition (basic and acidic residues); that stretch reads DKRDTEKERDWKREQQRLLRDRG.

It belongs to the SmpB family.

Its subcellular location is the cytoplasm. Functionally, required for rescue of stalled ribosomes mediated by trans-translation. Binds to transfer-messenger RNA (tmRNA), required for stable association of tmRNA with ribosomes. tmRNA and SmpB together mimic tRNA shape, replacing the anticodon stem-loop with SmpB. tmRNA is encoded by the ssrA gene; the 2 termini fold to resemble tRNA(Ala) and it encodes a 'tag peptide', a short internal open reading frame. During trans-translation Ala-aminoacylated tmRNA acts like a tRNA, entering the A-site of stalled ribosomes, displacing the stalled mRNA. The ribosome then switches to translate the ORF on the tmRNA; the nascent peptide is terminated with the 'tag peptide' encoded by the tmRNA and targeted for degradation. The ribosome is freed to recommence translation, which seems to be the essential function of trans-translation. The protein is SsrA-binding protein of Rhizorhabdus wittichii (strain DSM 6014 / CCUG 31198 / JCM 15750 / NBRC 105917 / EY 4224 / RW1) (Sphingomonas wittichii).